We begin with the raw amino-acid sequence, 227 residues long: Protein FAM3C (227 aa).

The signal sequence occupies residues 1–30 (MMRAGGLLKLGVLVSVLFVAVFLAFELLES). Disulfide bonds link Cys58/Cys86 and Cys64/Cys221. Positions 67 to 225 (DHFAFKITSG…LEMEGCIPIK (159 aa)) constitute a GG-type lectin domain.

Belongs to the FAM3 family.

It localises to the secreted. Involved in retinal laminar formation. The sequence is that of Protein FAM3C (fam3c) from Danio rerio (Zebrafish).